We begin with the raw amino-acid sequence, 383 residues long: Chaperone protein DnaJ (383 aa).

One can recognise a J domain in the interval 6–70; sequence DYYDVLGVGR…QKRAAYDQYG (65 aa). The CR-type zinc-finger motif lies at 140-222; the sequence is GKETKISYSR…CHGTGREEER (83 aa). Cys-153, Cys-156, Cys-170, Cys-173, Cys-196, Cys-199, Cys-210, and Cys-213 together coordinate Zn(2+). CXXCXGXG motif repeat units follow at residues 153-160, 170-177, 196-203, and 210-217; these read CHTCHGSG, CHKCHGAG, CDVCGGTG, and CDTCHGTG.

Belongs to the DnaJ family. Homodimer. It depends on Zn(2+) as a cofactor.

The protein resides in the cytoplasm. Its function is as follows. Participates actively in the response to hyperosmotic and heat shock by preventing the aggregation of stress-denatured proteins and by disaggregating proteins, also in an autonomous, DnaK-independent fashion. Unfolded proteins bind initially to DnaJ; upon interaction with the DnaJ-bound protein, DnaK hydrolyzes its bound ATP, resulting in the formation of a stable complex. GrpE releases ADP from DnaK; ATP binding to DnaK triggers the release of the substrate protein, thus completing the reaction cycle. Several rounds of ATP-dependent interactions between DnaJ, DnaK and GrpE are required for fully efficient folding. Also involved, together with DnaK and GrpE, in the DNA replication of plasmids through activation of initiation proteins. The chain is Chaperone protein DnaJ from Latilactobacillus sakei subsp. sakei (strain 23K) (Lactobacillus sakei subsp. sakei).